Here is an 86-residue protein sequence, read N- to C-terminus: Large ribosomal subunit protein uL23 (86 aa).

This sequence belongs to the universal ribosomal protein uL23 family. As to quaternary structure, part of the 50S ribosomal subunit. Contacts protein L29.

In terms of biological role, binds to 23S rRNA. One of the proteins that surrounds the polypeptide exit tunnel on the outside of the ribosome. The chain is Large ribosomal subunit protein uL23 from Methanocaldococcus jannaschii (strain ATCC 43067 / DSM 2661 / JAL-1 / JCM 10045 / NBRC 100440) (Methanococcus jannaschii).